Here is a 79-residue protein sequence, read N- to C-terminus: Small ribosomal subunit protein bS18 (79 aa).

The protein belongs to the bacterial ribosomal protein bS18 family. Part of the 30S ribosomal subunit. Forms a tight heterodimer with protein bS6.

Binds as a heterodimer with protein bS6 to the central domain of the 16S rRNA, where it helps stabilize the platform of the 30S subunit. In Listeria innocua serovar 6a (strain ATCC BAA-680 / CLIP 11262), this protein is Small ribosomal subunit protein bS18.